The following is a 907-amino-acid chain: Epidermal growth factor receptor substrate 15-like 1 (907 aa).

Position 2 is an N-acetylalanine (alanine 2). Residues 15 to 104 (GNPLYESYYK…SLTMPPPKFH (90 aa)) enclose the EH 1 domain. The interaction with DAB2 stretch occupies residues 15-368 (GNPLYESYYK…PSERGTPIPD (354 aa)). Residues 48-83 (LSDIILGKIWDLADPEGKGFLDKQGFYVALRLVACA) form the EF-hand 1 domain. Phosphotyrosine is present on tyrosine 74. Phosphoserine is present on residues serine 107 and serine 108. The 89-residue stretch at 127–215 (EKAKFDGIFE…PPLIPPSKRK (89 aa)) folds into the EH 2 domain. The EF-hand 2 domain occupies 159–194 (LPLDVLGRVWDLSDIDKDGHLDRDEFAVAMHLVYRA). Ca(2+) contacts are provided by aspartate 172, aspartate 174, aspartate 176, histidine 178, and glutamate 183. Phosphoserine is present on residues serine 229, serine 244, serine 253, serine 255, and serine 259. Residues 229–260 (SPPPKDSLRSTPSHGSVSSLNSTGSLSPKHSV) form a disordered region. Positions 241–255 (SHGSVSSLNSTGSLS) are enriched in low complexity. EF-hand domains lie at 272-307 (ADKMRFDEIFLKTDLDLDGYVSGQEVKEIFMHSGLT) and 308-341 (QNLLAHIWALADTRQTGKLSKEQFALAMYFIQQK). Residues 273–363 (DKMRFDEIFL…PDMVPPSERG (91 aa)) form the EH 3 domain. At serine 360 the chain carries Phosphoserine. Phosphothreonine is present on threonine 364. Residues serine 369 and serine 375 each carry the phosphoserine modification. Residues 384-551 (LDDISQEIAQ…RSKLSQLQES (168 aa)) adopt a coiled-coil conformation. Serine 558 carries the post-translational modification Phosphoserine. Residue tyrosine 562 is modified to Phosphotyrosine. Serine 610 carries the post-translational modification Phosphoserine. Residues 611-860 (QELHPDPFQA…SSSGFADFTS (250 aa)) are disordered. A compositionally biased stretch (basic and acidic residues) spans 622-636 (DPFKSDPFKGADPFK). The segment covering 643–652 (DPFSEQQTAA) has biased composition (polar residues). Phosphoserine is present on residues serine 664, serine 670, serine 695, serine 715, and serine 732. Polar residues predominate over residues 682–696 (NDPFTSDPFTKNPSL). Over residues 703 to 743 (FESSDPFSSSSISSKGSDPFGTLDPFGSSSFSSAEGFADFS) the composition is skewed to low complexity. Residues 776–790 (ALPPKKPAPPRPKPP) show a composition bias toward pro residues. At serine 791 the chain carries Phosphoserine. Positions 791-802 (SGQSTPVSQLGS) are enriched in polar residues. At threonine 795 the chain carries Phosphothreonine. Positions 840–853 (APSSSAKPPKTSSS) are enriched in low complexity. UIM domains lie at 863–882 (NEEQQLAWAKRESEKAEQER) and 889–907 (QEQEDLELAIALSKADMPA).

In terms of assembly, interacts with EPS15, AGFG1/HRB and AGFG2/HRBL. Associates with the clathrin-associated adapter protein complex 2 (AP-2). Interacts with FCHO1. Interacts with FCHO2. Interacts (via EH domains) with DAB2. Interacts with UBQLN1 (via ubiquitin-like domain). Interacts with CAVIN3 (via leucine-zipper domain). Interacts with REPS2. Phosphorylated on tyrosine residues by EGFR.

Its subcellular location is the cell membrane. The protein resides in the nucleus. It is found in the membrane. The protein localises to the coated pit. Seems to be a constitutive component of clathrin-coated pits that is required for receptor-mediated endocytosis. Involved in endocytosis of integrin beta-1 (ITGB1) and transferrin receptor (TFR); internalization of ITGB1 as DAB2-dependent cargo but not TFR seems to require association with DAB2. The protein is Epidermal growth factor receptor substrate 15-like 1 (Eps15l1) of Mus musculus (Mouse).